Reading from the N-terminus, the 81-residue chain is Large ribosomal subunit protein bL31B (81 aa).

It belongs to the bacterial ribosomal protein bL31 family. Type B subfamily. Part of the 50S ribosomal subunit.

The protein is Large ribosomal subunit protein bL31B of Borreliella burgdorferi (strain ZS7) (Borrelia burgdorferi).